Consider the following 889-residue polypeptide: Chitin synthase I (889 aa).

The N-linked (GlcNAc...) asparagine glycan is linked to Asn-43. The tract at residues 94–138 is disordered; the sequence is GEYFDGYNQGHPPQEHQAYDDDGQPLIEDQHGYSDNPQHQTQTPA. The span at 126-137 shows a compositional bias: polar residues; that stretch reads YSDNPQHQTQTP. Asn-199 carries N-linked (GlcNAc...) asparagine glycosylation. 9 helical membrane-spanning segments follow: residues 431–451, 530–550, 560–580, 606–626, 641–661, 687–707, 716–736, 815–835, and 861–881; these read SAFG…YVAL, RWLN…YEFF, LAFF…WFAI, ILGV…FVLS, MVWF…FIAV, TLII…IIMF, FIQY…YAFC, GVVL…LSSA, and IVLW…MWFL.

Belongs to the chitin synthase family. Class I subfamily. As to expression, expressed in hyphal bodies.

It localises to the cell membrane. The catalysed reaction is [(1-&gt;4)-N-acetyl-beta-D-glucosaminyl](n) + UDP-N-acetyl-alpha-D-glucosamine = [(1-&gt;4)-N-acetyl-beta-D-glucosaminyl](n+1) + UDP + H(+). In terms of biological role, polymerizes chitin, a structural polymer of the cell wall and septum, by transferring the sugar moiety of UDP-GlcNAc to the non-reducing end of the growing chitin polymer. Contributes to the production of conidia and the ability of fungal conidia to germinate. Not involved in fungal stress tolerances. The protein is Chitin synthase I of Metarhizium acridum (strain CQMa 102).